Reading from the N-terminus, the 61-residue chain is Small ribosomal subunit protein eS31 (61 aa).

Residues cysteine 22, cysteine 25, cysteine 38, and cysteine 41 each coordinate Zn(2+). The C4-type zinc-finger motif lies at 22–41 (CPRCGSFMAEHKDRYHCGKC).

This sequence belongs to the eukaryotic ribosomal protein eS31 family. In terms of assembly, part of the 30S ribosomal subunit. Zn(2+) serves as cofactor.

The chain is Small ribosomal subunit protein eS31 from Nanoarchaeum equitans (strain Kin4-M).